The following is a 1150-amino-acid chain: ATP-dependent helicase/deoxyribonuclease subunit B (1150 aa).

Residue 8–15 (GRAGSGKS) coordinates ATP. [4Fe-4S] cluster-binding residues include Cys786, Cys1106, Cys1109, and Cys1115.

This sequence belongs to the helicase family. AddB/RexB type 1 subfamily. In terms of assembly, heterodimer of AddA and AddB. The cofactor is Mg(2+). [4Fe-4S] cluster is required as a cofactor.

In terms of biological role, the heterodimer acts as both an ATP-dependent DNA helicase and an ATP-dependent, dual-direction single-stranded exonuclease. Recognizes the chi site generating a DNA molecule suitable for the initiation of homologous recombination. The AddB subunit has 5' -&gt; 3' nuclease activity but not helicase activity. This is ATP-dependent helicase/deoxyribonuclease subunit B from Clostridium botulinum (strain Okra / Type B1).